A 203-amino-acid chain; its full sequence is Corrinoid adenosyltransferase (203 aa).

The segment at 1 to 21 is disordered; it reads MNESPEKDQRHRERMERKKAV. ATP is bound at residue 41-47; it reads GNGKGKS.

This sequence belongs to the Cob(I)alamin adenosyltransferase family. Monomer. Requires Mn(2+) as cofactor.

The protein localises to the cytoplasm. It catalyses the reaction 2 cob(II)yrinate a,c diamide + reduced [electron-transfer flavoprotein] + 2 ATP = 2 adenosylcob(III)yrinate a,c-diamide + 2 triphosphate + oxidized [electron-transfer flavoprotein] + 3 H(+). The enzyme catalyses 2 cob(II)alamin + reduced [electron-transfer flavoprotein] + 2 ATP = 2 adenosylcob(III)alamin + 2 triphosphate + oxidized [electron-transfer flavoprotein] + 3 H(+). Its pathway is cofactor biosynthesis; adenosylcobalamin biosynthesis; adenosylcobalamin from cob(II)yrinate a,c-diamide: step 2/7. Its function is as follows. Required for both de novo synthesis of the corrin ring for the assimilation of exogenous corrinoids. Participates in the adenosylation of a variety of incomplete and complete corrinoids. This chain is Corrinoid adenosyltransferase (cobO), found in Pseudomonas aeruginosa (strain ATCC 15692 / DSM 22644 / CIP 104116 / JCM 14847 / LMG 12228 / 1C / PRS 101 / PAO1).